The primary structure comprises 54 residues: MARNDIRPIIKLKSTAGTGYTYVTRKNKRNNPDRISLMKYDPVVRKHVEFREER.

The protein belongs to the bacterial ribosomal protein bL33 family.

In Corynebacterium glutamicum (strain R), this protein is Large ribosomal subunit protein bL33.